The primary structure comprises 89 residues: uncharacterized protein (89 aa).

The HTH arsR-type domain maps to 1 to 89 (MEKYEKAAEI…KEIIKLVDEL (89 aa)).

This is an uncharacterized protein from Methanocaldococcus jannaschii (strain ATCC 43067 / DSM 2661 / JAL-1 / JCM 10045 / NBRC 100440) (Methanococcus jannaschii).